The sequence spans 893 residues: DNA mismatch repair protein MutS (893 aa).

Positions 1–17 (MESTMSSASTNASPPSA) are enriched in low complexity. Residues 1–22 (MESTMSSASTNASPPSASEKHT) are disordered. ATP is bound at residue 641-648 (GPNMGGKS).

This sequence belongs to the DNA mismatch repair MutS family.

Functionally, this protein is involved in the repair of mismatches in DNA. It is possible that it carries out the mismatch recognition step. This protein has a weak ATPase activity. This Herminiimonas arsenicoxydans protein is DNA mismatch repair protein MutS.